We begin with the raw amino-acid sequence, 262 residues long: Type III pantothenate kinase (262 aa).

9 to 16 (DIGNTNVK) contributes to the ATP binding site. Residues Tyr-103 and 110–113 (GADR) contribute to the substrate site. The active-site Proton acceptor is the Asp-112. Asp-134 provides a ligand contact to K(+). Position 137 (Thr-137) interacts with ATP. Thr-190 lines the substrate pocket.

Belongs to the type III pantothenate kinase family. As to quaternary structure, homodimer. Requires NH4(+) as cofactor. The cofactor is K(+).

The protein localises to the cytoplasm. It carries out the reaction (R)-pantothenate + ATP = (R)-4'-phosphopantothenate + ADP + H(+). The protein operates within cofactor biosynthesis; coenzyme A biosynthesis; CoA from (R)-pantothenate: step 1/5. Functionally, catalyzes the phosphorylation of pantothenate (Pan), the first step in CoA biosynthesis. This chain is Type III pantothenate kinase, found in Nitratidesulfovibrio vulgaris (strain DSM 19637 / Miyazaki F) (Desulfovibrio vulgaris).